Consider the following 204-residue polypeptide: uncharacterized protein (204 aa).

Functionally, possibly involved in pGI2 replication mechanism. This is an uncharacterized protein from Bacillus thuringiensis.